The primary structure comprises 185 residues: ATP synthase subunit delta, chloroplastic (185 aa).

Belongs to the ATPase delta chain family. In terms of assembly, F-type ATPases have 2 components, F(1) - the catalytic core - and F(0) - the membrane proton channel. F(1) has five subunits: alpha(3), beta(3), gamma(1), delta(1), epsilon(1). CF(0) has four main subunits: a(1), b(1), b'(1) and c(10-14). The alpha and beta chains form an alternating ring which encloses part of the gamma chain. F(1) is attached to F(0) by a central stalk formed by the gamma and epsilon chains, while a peripheral stalk is formed by the delta, b and b' chains.

It localises to the plastid. The protein localises to the chloroplast thylakoid membrane. In terms of biological role, f(1)F(0) ATP synthase produces ATP from ADP in the presence of a proton or sodium gradient. F-type ATPases consist of two structural domains, F(1) containing the extramembraneous catalytic core and F(0) containing the membrane proton channel, linked together by a central stalk and a peripheral stalk. During catalysis, ATP synthesis in the catalytic domain of F(1) is coupled via a rotary mechanism of the central stalk subunits to proton translocation. Functionally, this protein is part of the stalk that links CF(0) to CF(1). It either transmits conformational changes from CF(0) to CF(1) or is implicated in proton conduction. The protein is ATP synthase subunit delta, chloroplastic of Gracilaria tenuistipitata var. liui (Red alga).